A 446-amino-acid chain; its full sequence is Glucarate dehydratase-related protein (446 aa).

Substrate-binding residues include H31, T104, Y149, and K204. K206 serves as the catalytic Proton acceptor. 3 residues coordinate Mg(2+): D234, E265, and N288. Substrate is bound at residue 234-236 (DPN). Residues N288, 338–340 (HSN), H367, and R421 each bind substrate. H338 serves as the catalytic Proton acceptor.

This sequence belongs to the mandelate racemase/muconate lactonizing enzyme family. GlucD subfamily. Requires a divalent metal cation as cofactor.

Its function is as follows. Does not seem to have an in-vivo activity on glucarate or idarate. Its real substrate is unknown. The polypeptide is Glucarate dehydratase-related protein (gudX) (Escherichia coli (strain K12)).